We begin with the raw amino-acid sequence, 485 residues long: NADH-quinone oxidoreductase subunit N (485 aa).

14 helical membrane-spanning segments follow: residues 8–28 (LIALLPLLIVGLTVVVVMLSI), 35–55 (FLNATLSVVGLNAALLSLWFV), 75–95 (LYTGLVLLASLATCTFAYPWL), 105–125 (FYLLVLIAALGGILLANANHL), 127–147 (SLFLGIELISLPLFGLVGYAF), 159–179 (YTILSAAASSFLLFGMALVYA), 203–223 (LLAGLGLMIVGLGFKLSLVPF), 235–255 (PAPVSTFLATASKIAIFGVVM), 271–291 (VVLGVLAFASILFGNLMALTQ), 297–317 (LLGYSSISHLGYLLVALIALK), 326–346 (VGVYLAGYLFSSLGAFGVVSL), 374–394 (AVMTVMMLSLAGIPMTLGFIG), 408–427 (WWLTGAVVVGSAIGLYYYLR), and 455–475 (VVVLISALLVLVLGVWPQPLI).

Belongs to the complex I subunit 2 family. As to quaternary structure, NDH-1 is composed of 13 different subunits. Subunits NuoA, H, J, K, L, M, N constitute the membrane sector of the complex.

It is found in the cell inner membrane. It catalyses the reaction a quinone + NADH + 5 H(+)(in) = a quinol + NAD(+) + 4 H(+)(out). Its function is as follows. NDH-1 shuttles electrons from NADH, via FMN and iron-sulfur (Fe-S) centers, to quinones in the respiratory chain. The immediate electron acceptor for the enzyme in this species is believed to be ubiquinone. Couples the redox reaction to proton translocation (for every two electrons transferred, four hydrogen ions are translocated across the cytoplasmic membrane), and thus conserves the redox energy in a proton gradient. In Cronobacter sakazakii (strain ATCC BAA-894) (Enterobacter sakazakii), this protein is NADH-quinone oxidoreductase subunit N.